The following is a 43-amino-acid chain: uncharacterized protein (43 aa).

This is an uncharacterized protein from Saccharomyces cerevisiae (strain ATCC 204508 / S288c) (Baker's yeast).